A 479-amino-acid chain; its full sequence is Cardiolipin synthase A (479 aa).

2 helical membrane-spanning segments follow: residues Leu8–Val28 and Ile38–Phe58. PLD phosphodiesterase domains are found at residues Val218 to Tyr245 and Thr392 to Ser419. Residues His223, Lys225, Asp230, His397, Lys399, and Asp404 contribute to the active site.

This sequence belongs to the phospholipase D family. Cardiolipin synthase subfamily. ClsA sub-subfamily.

It is found in the cell inner membrane. It carries out the reaction 2 a 1,2-diacyl-sn-glycero-3-phospho-(1'-sn-glycerol) = a cardiolipin + glycerol. In terms of biological role, catalyzes the reversible phosphatidyl group transfer from one phosphatidylglycerol molecule to another to form cardiolipin (CL) (diphosphatidylglycerol) and glycerol. This is Cardiolipin synthase A from Pseudomonas fluorescens (strain SBW25).